A 445-amino-acid chain; its full sequence is von Willebrand factor A domain-containing protein 1 (445 aa).

The N-terminal stretch at M1–A22 is a signal peptide. The region spanning D34–M213 is the VWFA domain. Residues S74 and S80 each carry the phosphoserine; by FAM20C modification. Residue Y83 is modified to Phosphotyrosine. S93 is modified (phosphoserine; by FAM20C). Residues R214–G304 enclose the Fibronectin type-III 1 domain. N264 carries an N-linked (GlcNAc...) asparagine glycan. Disordered regions lie at residues R302–A325 and R411–P445. Residues S311–A325 show a composition bias toward low complexity. Residues G334–P427 form the Fibronectin type-III 2 domain.

In terms of assembly, homodimer or homomultimer; disulfide-linked. Interacts with HSPG2. N-glycosylated.

The protein resides in the secreted. Its subcellular location is the extracellular space. It is found in the extracellular matrix. The protein localises to the basement membrane. In terms of biological role, promotes matrix assembly. Involved in the organization of skeletal muscles and in the formation of neuromuscular junctions. The sequence is that of von Willebrand factor A domain-containing protein 1 from Homo sapiens (Human).